The sequence spans 81 residues: Photosystem I iron-sulfur center (81 aa).

4Fe-4S ferredoxin-type domains are found at residues 2–31 and 39–68; these read AHSV…MVPW and IASA…VRVY. [4Fe-4S] cluster is bound by residues cysteine 11, cysteine 14, cysteine 17, cysteine 21, cysteine 48, cysteine 51, cysteine 54, and cysteine 58.

In terms of assembly, the eukaryotic PSI reaction center is composed of at least 11 subunits. It depends on [4Fe-4S] cluster as a cofactor.

It is found in the plastid. The protein localises to the chloroplast thylakoid membrane. The enzyme catalyses reduced [plastocyanin] + hnu + oxidized [2Fe-2S]-[ferredoxin] = oxidized [plastocyanin] + reduced [2Fe-2S]-[ferredoxin]. Apoprotein for the two 4Fe-4S centers FA and FB of photosystem I (PSI); essential for photochemical activity. FB is the terminal electron acceptor of PSI, donating electrons to ferredoxin. The C-terminus interacts with PsaA/B/D and helps assemble the protein into the PSI complex. Required for binding of PsaD and PsaE to PSI. PSI is a plastocyanin-ferredoxin oxidoreductase, converting photonic excitation into a charge separation, which transfers an electron from the donor P700 chlorophyll pair to the spectroscopically characterized acceptors A0, A1, FX, FA and FB in turn. The sequence is that of Photosystem I iron-sulfur center from Chlorokybus atmophyticus (Soil alga).